The chain runs to 384 residues: PqqA peptide cyclase (384 aa).

Residues 5–220 form the Radical SAM core domain; it reads VGLPLWLLAE…TNEYREKLKA (216 aa). The [4Fe-4S] cluster site is built by cysteine 19, cysteine 23, and cysteine 26.

It belongs to the radical SAM superfamily. PqqE family. Interacts with PqqD. The interaction is necessary for activity of PqqE. [4Fe-4S] cluster is required as a cofactor.

The enzyme catalyses [PQQ precursor protein] + S-adenosyl-L-methionine = E-Y cross-linked-[PQQ precursor protein] + 5'-deoxyadenosine + L-methionine + H(+). It functions in the pathway cofactor biosynthesis; pyrroloquinoline quinone biosynthesis. In terms of biological role, catalyzes the cross-linking of a glutamate residue and a tyrosine residue in the PqqA protein as part of the biosynthesis of pyrroloquinoline quinone (PQQ). The sequence is that of PqqA peptide cyclase from Acinetobacter baumannii (strain SDF).